We begin with the raw amino-acid sequence, 144 residues long: Nucleoside diphosphate kinase (144 aa).

ATP is bound by residues Lys11, Phe59, Arg87, Thr93, Arg104, and Asn114. His117 serves as the catalytic Pros-phosphohistidine intermediate.

This sequence belongs to the NDK family. In terms of assembly, homotetramer. Requires Mg(2+) as cofactor.

Its subcellular location is the cytoplasm. The catalysed reaction is a 2'-deoxyribonucleoside 5'-diphosphate + ATP = a 2'-deoxyribonucleoside 5'-triphosphate + ADP. It catalyses the reaction a ribonucleoside 5'-diphosphate + ATP = a ribonucleoside 5'-triphosphate + ADP. Major role in the synthesis of nucleoside triphosphates other than ATP. The ATP gamma phosphate is transferred to the NDP beta phosphate via a ping-pong mechanism, using a phosphorylated active-site intermediate. This is Nucleoside diphosphate kinase from Sorangium cellulosum (strain So ce56) (Polyangium cellulosum (strain So ce56)).